A 500-amino-acid polypeptide reads, in one-letter code: ATP synthase subunit alpha, sodium ion specific (500 aa).

An ATP-binding site is contributed by 169-176; it reads GDRQTGKT.

The protein belongs to the ATPase alpha/beta chains family. F-type ATPases have 2 components, CF(1) - the catalytic core - and CF(0) - the membrane proton channel. CF(1) has five subunits: alpha(3), beta(3), gamma(1), delta(1), epsilon(1). CF(0) has three main subunits: a, b and c.

The protein resides in the cell membrane. The catalysed reaction is 4 Na(+)(in) + ATP + H2O = 4 Na(+)(out) + ADP + phosphate + H(+). In terms of biological role, produces ATP from ADP in the presence of a sodium ion gradient across the membrane. The alpha chain is a regulatory subunit. In Propionigenium modestum, this protein is ATP synthase subunit alpha, sodium ion specific.